The primary structure comprises 156 residues: Small ribosomal subunit protein uS7c (156 aa).

This sequence belongs to the universal ribosomal protein uS7 family. As to quaternary structure, part of the 30S ribosomal subunit.

It localises to the plastid. It is found in the chloroplast. In terms of biological role, one of the primary rRNA binding proteins, it binds directly to 16S rRNA where it nucleates assembly of the head domain of the 30S subunit. The chain is Small ribosomal subunit protein uS7c (rps7) from Nephroselmis olivacea (Green alga).